Here is a 1738-residue protein sequence, read N- to C-terminus: Complement C4-B (1738 aa).

The first 19 residues, 1–19, serve as a signal peptide directing secretion; that stretch reads MRLLWGLAWVFSFCASSLQ. Cys66 and Cys95 are disulfide-bonded. N-linked (GlcNAc...) asparagine glycosylation is present at Asn224. Cys633 and Cys667 are oxidised to a cystine. The propeptide occupies 674-677; the sequence is RQKR. Disulfide bonds link Cys700–Cys726, Cys701–Cys733, and Cys714–Cys734. Residues 700–734 form the Anaphylatoxin-like domain; it reads CCQDGMTKLPMKRTCEQRAARVPQQACREPFLSCC. Asn743 is a glycosylation site (N-linked (GlcNAc...) asparagine). The segment at residues 1006–1009 is a cross-link (isoglutamyl cysteine thioester (Cys-Gln)); the sequence is CAEQ. Residues Asn1324 and Asn1387 are each glycosylated (N-linked (GlcNAc...) asparagine). Tyr1413, Tyr1416, and Tyr1417 each carry sulfotyrosine. The propeptide occupies 1444–1447; it reads RRRR. 5 disulfide bridges follow: Cys1465–Cys1529, Cys1577–Cys1582, Cys1589–Cys1667, Cys1612–Cys1736, and Cys1712–Cys1721. In terms of domain architecture, NTR spans 1589–1736; the sequence is CPRLLRSLER…FLMEFSSRGC (148 aa).

As to quaternary structure, in absence of complement activation, circulates in blood as a disulfide-linked trimer of an alpha, beta and gamma chain. Complement C4b is composed of complement C4b-A, complement C4 beta and complement C4 gamma chains that are associated via disulfide bonds. Non-enzymatic component of the C3 convertase, also named C4bC2b, composed of the serine protease complement C2b (C2), as well as complement C4b. Non-enzymatic component of the C5 convertase, also named C4bC2bC3b, composed of the serine protease complement C2b (C2), complement C3b, as well as complement C4b. In terms of processing, prior to secretion, the single-chain precursor is enzymatically cleaved by plasminogen (PLG) to yield non-identical chains alpha, beta and gamma. During activation of the complement systems, the alpha chain is cleaved into C4a and C4b by different proteases depending on the complement pathway: C4b stays linked to the beta and gamma chains, while C4a is released in the plasma. The alpha chain is cleaved by C1S to generate C4a and C4b following activation by the classical complement system. The alpha chain is cleaved to generate C4a and C4b by MASP2 following activation by the lectin complement system. The alpha chain is cleaved by GZMK to generate C4a and C4b following activation by the GZMK complement system. Further degradation of C4b by C1 into the inactive fragments C4c and C4d blocks the generation of C3 convertase. The proteolytic cleavages often are incomplete so that many structural forms can be found in plasma. Post-translationally, upon activation, the internal thioester bond reacts with carbohydrate antigens on the target surface to form amide or ester bonds, leading to covalent association with the surface of pathogens. Complement C4b interacts with complement C3b via a thioester linkage.

The protein localises to the secreted. It is found in the cell surface. In terms of biological role, precursor of non-enzymatic components of the classical, lectin and GZMK complement pathways, which consist in a cascade of proteins that leads to phagocytosis and breakdown of pathogens and signaling that strengthens the adaptive immune system. Functionally, non-enzymatic component of C3 and C5 convertases. Generated following cleavage by complement proteases (C1S, MASP2 or GZMK, depending on the complement pathway), it covalently attaches to the surface of pathogens, where it acts as an opsonin that marks the surface of antigens for removal. It then recruits the serine protease complement C2b to form the C3 and C5 convertases, which cleave and activate C3 and C5, respectively, the next components of the complement pathways. Complement C4b-A isotype is responsible for effective binding to form amide bonds with immune aggregates or protein antigens, while complement C4b-B isotype catalyzes the transacylation of the thioester carbonyl group to form ester bonds with carbohydrate antigens. Putative humoral mediator released following cleavage by complement proteases (C1S, MASP2 or GZMK, depending on the complement pathway). While it is strongly similar to anaphylatoxins, its role is unclear. Was reported to act as a mediator of local inflammatory process; however these effects were probably due to contamination with C3a and/C5a anaphylatoxins in biological assays. The protein is Complement C4-B of Mus musculus (Mouse).